We begin with the raw amino-acid sequence, 390 residues long: uncharacterized protein (390 aa).

Transmembrane regions (helical) follow at residues 7 to 27 (IYIL…ISGI), 35 to 55 (LGIT…VYAL), 77 to 97 (LGLF…GWFI), 101 to 121 (IIMA…AAKI), 128 to 148 (GSAI…GVPL), 161 to 181 (VFGA…FTLP), 203 to 223 (VAMG…AYTY), 238 to 258 (LLSG…KFGG), 281 to 301 (LILL…LILW), 335 to 355 (MQFA…NVSL), and 357 to 377 (SITW…LLIF).

This sequence belongs to the major facilitator superfamily.

It localises to the cell membrane. This is an uncharacterized protein from Bacillus subtilis (strain 168).